The chain runs to 116 residues: Nucleoid-associated protein Tfu_0045 (116 aa).

It belongs to the YbaB/EbfC family. As to quaternary structure, homodimer.

It is found in the cytoplasm. The protein resides in the nucleoid. Its function is as follows. Binds to DNA and alters its conformation. May be involved in regulation of gene expression, nucleoid organization and DNA protection. The sequence is that of Nucleoid-associated protein Tfu_0045 from Thermobifida fusca (strain YX).